A 436-amino-acid chain; its full sequence is Cytokine receptor-like factor 3 (436 aa).

A coiled-coil region spans residues 9-87; that stretch reads LMQEAWESID…VSAIEQENIK (79 aa). In terms of domain architecture, Fibronectin type-III spans 177–270; it reads PPVQIEELIE…LQTSRTTLVP (94 aa).

This sequence belongs to the cytokine receptor-like factor 3 family.

It localises to the cytoplasm. In terms of biological role, may play a role in the negative regulation of cell cycle progression. The polypeptide is Cytokine receptor-like factor 3 (crlf3) (Xenopus laevis (African clawed frog)).